Consider the following 244-residue polypeptide: Ribosome maturation factor RimM (244 aa).

Residues 1 to 58 are disordered; it reads MSERDSGSSGPVKAKAAAPRAKTSGQAPFGAFVRKPVEKTEGKAKANAANAGSGATEM. The span at 13-22 shows a compositional bias: low complexity; sequence KAKAAAPRAK. The segment covering 35–44 has biased composition (basic and acidic residues); it reads KPVEKTEGKA. Residues 45–57 are compositionally biased toward low complexity; it reads KANAANAGSGATE. Positions 163-244 constitute a PRC barrel domain; it reads ADEFYWVDLL…QITVDWEADY (82 aa).

The protein belongs to the RimM family. In terms of assembly, binds ribosomal protein uS19.

It localises to the cytoplasm. Its function is as follows. An accessory protein needed during the final step in the assembly of 30S ribosomal subunit, possibly for assembly of the head region. Essential for efficient processing of 16S rRNA. May be needed both before and after RbfA during the maturation of 16S rRNA. It has affinity for free ribosomal 30S subunits but not for 70S ribosomes. This is Ribosome maturation factor RimM from Paraburkholderia xenovorans (strain LB400).